The chain runs to 358 residues: DNA-directed RNA polymerase subunit alpha (358 aa).

The interval 1-231 is alpha N-terminal domain (alpha-NTD); it reads MIQNVTDDKI…NIFLSLSNSS (231 aa). Residues 266–358 are alpha C-terminal domain (alpha-CTD); that stretch reads QESLGWKKIS…LELINNKDIS (93 aa).

Belongs to the RNA polymerase alpha chain family. In plastids the minimal PEP RNA polymerase catalytic core is composed of four subunits: alpha, beta, beta', and beta''. When a (nuclear-encoded) sigma factor is associated with the core the holoenzyme is formed, which can initiate transcription.

The protein resides in the plastid. The protein localises to the chloroplast. It catalyses the reaction RNA(n) + a ribonucleoside 5'-triphosphate = RNA(n+1) + diphosphate. Functionally, DNA-dependent RNA polymerase catalyzes the transcription of DNA into RNA using the four ribonucleoside triphosphates as substrates. The sequence is that of DNA-directed RNA polymerase subunit alpha from Chara vulgaris (Common stonewort).